Reading from the N-terminus, the 64-residue chain is Large ribosomal subunit protein bL35 (64 aa).

Residues 18 to 39 are disordered; it reads GSGLVKHYPSNKHHKNTHKKEN. A compositionally biased stretch (basic residues) spans 26–39; the sequence is PSNKHHKNTHKKEN.

The protein belongs to the bacterial ribosomal protein bL35 family.

The sequence is that of Large ribosomal subunit protein bL35 from Symbiobacterium thermophilum (strain DSM 24528 / JCM 14929 / IAM 14863 / T).